A 367-amino-acid chain; its full sequence is Peptide chain release factor 2 (367 aa).

The residue at position 254 (glutamine 254) is an N5-methylglutamine.

Belongs to the prokaryotic/mitochondrial release factor family. Post-translationally, methylated by PrmC. Methylation increases the termination efficiency of RF2.

It is found in the cytoplasm. Its function is as follows. Peptide chain release factor 2 directs the termination of translation in response to the peptide chain termination codons UGA and UAA. The polypeptide is Peptide chain release factor 2 (Burkholderia cenocepacia (strain ATCC BAA-245 / DSM 16553 / LMG 16656 / NCTC 13227 / J2315 / CF5610) (Burkholderia cepacia (strain J2315))).